Here is a 636-residue protein sequence, read N- to C-terminus: Chitin synthase VI (636 aa).

The next 4 helical transmembrane spans lie at Leu-23–Ile-43, Thr-374–Ala-394, Leu-399–Gly-419, and Ile-427–Tyr-447. The tract at residues Gln-595–Phe-636 is disordered. Positions Pro-607–Ser-627 are enriched in polar residues.

The protein belongs to the chitin synthase family. Class VI subfamily. As to expression, moderately expressed during appressorium formation.

It localises to the cell membrane. The enzyme catalyses [(1-&gt;4)-N-acetyl-beta-D-glucosaminyl](n) + UDP-N-acetyl-alpha-D-glucosamine = [(1-&gt;4)-N-acetyl-beta-D-glucosaminyl](n+1) + UDP + H(+). Its function is as follows. Polymerizes chitin, a structural polymer of the cell wall and septum, by transferring the sugar moiety of UDP-GlcNAc to the non-reducing end of the growing chitin polymer. Contributes to the production of conidia but is the only chitine synthase that does not contribute to the ability of fungal conidia to germinate. Involved in fungal stress tolerances. The sequence is that of Chitin synthase VI from Metarhizium acridum (strain CQMa 102).